Consider the following 373-residue polypeptide: Glutamine synthetase (373 aa).

Ala2 is modified (N-acetylalanine). The segment at 2–25 is required for glutamine-induced ubiquitination by CRL4(CRBN) and proteasomal degradation; the sequence is ATSASSHLNKGIKQVYMSLPQGEK. An N6-acetyllysine mark is found at Lys11 and Lys14. Residues 24 to 106 form the GS beta-grasp domain; the sequence is EKVQAMYIWI…VFCEVFKYNR (83 aa). Tyr104 bears the Phosphotyrosine mark. Residues 113–373 enclose the GS catalytic domain; sequence LRHTCKRIMD…TGDEPFQYKN (261 aa). Glu134 lines the ATP pocket. Glu134, Glu136, Glu196, and Glu203 together coordinate Mn(2+). An ATP-binding site is contributed by 203-208; sequence EFQIGP. 246-247 serves as a coordination point for L-glutamate; it reads NW. A Mn(2+)-binding site is contributed by His253. Residues 255 to 257, Arg319, and Arg324 contribute to the ATP site; that span reads NFS. Arg319 lines the L-glutamate pocket. 336 to 338 contacts ADP; sequence YFE. Position 338 (Glu338) interacts with Mn(2+). Arg340 contributes to the L-glutamate binding site. Ser343 is modified (phosphoserine).

This sequence belongs to the glutamine synthetase family. Decamer; composed of two pentamers. Interacts with PALMD. Interacts with RHOJ. Interacts with BEST2; this interaction tethers a fraction of GLUL to the membrane, causing a decrease of cytosolic glutamine synthase (GS) activity and inhibits the chloride channel activity of BEST2 by affecting the gating at the aperture in the absence of intracellular glutamate. Mg(2+) is required as a cofactor. Mn(2+) serves as cofactor. In terms of processing, palmitoylated; undergoes autopalmitoylation. Acetylated by EP300/p300; acetylation is stimulated by increased glutamine levels and promotes ubiquitin-mediated proteasomal degradation. Post-translationally, ubiquitinated by ZNRF1. Ubiquitinated by the DCX (DDB1-CUL4-X-box) E3 ubiquitin-protein ligase complex called CRL4(CRBN), leading to proteasomal degradation.

It localises to the cytoplasm. The protein localises to the cytosol. It is found in the microsome. The protein resides in the mitochondrion. Its subcellular location is the cell membrane. It catalyses the reaction L-glutamate + NH4(+) + ATP = L-glutamine + ADP + phosphate + H(+). The catalysed reaction is L-cysteinyl-[protein] + hexadecanoyl-CoA = S-hexadecanoyl-L-cysteinyl-[protein] + CoA. Glutamine synthetase activity is inhibited by methionine sulfoximine (MSO). Functionally, glutamine synthetase that catalyzes the ATP-dependent conversion of glutamate and ammonia to glutamine. Its role depends on tissue localization: in the brain, it regulates the levels of toxic ammonia and converts neurotoxic glutamate to harmless glutamine, whereas in the liver, it is one of the enzymes responsible for the removal of ammonia. Plays a key role in ammonium detoxification during erythropoiesis: the glutamine synthetase activity is required to remove ammonium generated by porphobilinogen deaminase (HMBS) during heme biosynthesis to prevent ammonium accumulation and oxidative stress. Essential for proliferation of fetal skin fibroblasts. Independently of its glutamine synthetase activity, required for endothelial cell migration during vascular development. Involved in angiogenesis by regulating membrane localization and activation of the GTPase RHOJ, possibly by promoting RHOJ palmitoylation. May act as a palmitoyltransferase for RHOJ: able to autopalmitoylate and then transfer the palmitoyl group to RHOJ. Plays a role in ribosomal 40S subunit biogenesis. Through the interaction with BEST2, inhibits BEST2 channel activity by affecting the gating at the aperture in the absence of intracellular L-glutamate, but sensitizes BEST2 to intracellular L-glutamate, which promotes the opening of BEST2 and thus relieves its inhibitory effect on BEST2. This Sus scrofa (Pig) protein is Glutamine synthetase.